The following is a 241-amino-acid chain: uncharacterized protein (241 aa).

Positions 147-212 constitute an HTH luxR-type domain; the sequence is FSYRSVILTL…EMYAWINSAQ (66 aa).

This is an uncharacterized protein from Escherichia coli O157:H7.